The sequence spans 390 residues: MKKISILGSTGSIGTQTLDIVTDHPDKFQVVGLATGNNIQLLSEQIRQFRPQIVAINNESQLEDLKSLISDLDYTPIILAGKEGVIEVARYGDSESVVTGIVGCAGLLPTIAAITAGKDIALANKETLIAGGPVVLPLVEKHRVKLLPADSEHSAIFQCLQGVPTGGLKKIILTASGGAFRDLPVEKLPQVTVADALKHPNWSMGRKITIDSATLMNKGLEVIEAHYLFGVDYNAIDIVIHPQSIIHSLIELQDTSVLAQLGWPDMRLPLLYALSWPERIYTDWEPLNLVKAGSLTFKEPDHQKYPCMGLAYAAGRAGGAMPAVLNAANEQAVALFLEEKISFLDIPRVIEKVCDRFAIHNTSTPSLDDILAADNWARQEVSNCLIANPV.

NADPH is bound by residues T10, G11, S12, I13, G36, N38, and N124. Residue K125 coordinates 1-deoxy-D-xylulose 5-phosphate. Residue E126 coordinates NADPH. Mn(2+) is bound at residue D150. The 1-deoxy-D-xylulose 5-phosphate site is built by S151, E152, S176, and H199. Mn(2+) is bound at residue E152. NADPH is bound at residue G205. Positions 212, 217, 218, and 221 each coordinate 1-deoxy-D-xylulose 5-phosphate. E221 provides a ligand contact to Mn(2+).

Belongs to the DXR family. Mg(2+) is required as a cofactor. The cofactor is Mn(2+).

It carries out the reaction 2-C-methyl-D-erythritol 4-phosphate + NADP(+) = 1-deoxy-D-xylulose 5-phosphate + NADPH + H(+). The protein operates within isoprenoid biosynthesis; isopentenyl diphosphate biosynthesis via DXP pathway; isopentenyl diphosphate from 1-deoxy-D-xylulose 5-phosphate: step 1/6. Its function is as follows. Catalyzes the NADPH-dependent rearrangement and reduction of 1-deoxy-D-xylulose-5-phosphate (DXP) to 2-C-methyl-D-erythritol 4-phosphate (MEP). This chain is 1-deoxy-D-xylulose 5-phosphate reductoisomerase, found in Microcystis aeruginosa (strain NIES-843 / IAM M-2473).